Consider the following 251-residue polypeptide: NADPH-dependent oxidoreductase (251 aa).

This sequence belongs to the flavin oxidoreductase frp family. FMN is required as a cofactor.

Its function is as follows. Reduces FMN, organic nitro compounds and disulfide DTNB. Involved in maintenance of the cellular redox state and the disulfide stress response. This Staphylococcus aureus (strain bovine RF122 / ET3-1) protein is NADPH-dependent oxidoreductase (nfrA).